An 84-amino-acid polypeptide reads, in one-letter code: Kunitz-type serine protease inhibitor B4 (84 aa).

The first 24 residues, 1–24 (MSSGGLLLLLGLLTLWAELTPISG), serve as a signal peptide directing secretion. Residues 31–81 (CNLAPESGRCRGHLRRIYYNLESNKCEVFFYGGCGGNDNNFSTWDECRHTC) enclose the BPTI/Kunitz inhibitor domain. Cystine bridges form between cysteine 31–cysteine 81, cysteine 40–cysteine 64, and cysteine 56–cysteine 77. N-linked (GlcNAc...) asparagine glycosylation occurs at asparagine 70.

This sequence belongs to the venom Kunitz-type family. In terms of tissue distribution, expressed by the venom gland.

Its subcellular location is the secreted. In terms of biological role, serine protease inhibitor that inhibits plasmin and trypsin. This Daboia siamensis (Eastern Russel's viper) protein is Kunitz-type serine protease inhibitor B4.